Here is a 125-residue protein sequence, read N- to C-terminus: Small ribosomal subunit protein uS12 (125 aa).

Asp89 carries the 3-methylthioaspartic acid modification.

Belongs to the universal ribosomal protein uS12 family. In terms of assembly, part of the 30S ribosomal subunit. Contacts proteins S8 and S17. May interact with IF1 in the 30S initiation complex.

Functionally, with S4 and S5 plays an important role in translational accuracy. In terms of biological role, interacts with and stabilizes bases of the 16S rRNA that are involved in tRNA selection in the A site and with the mRNA backbone. Located at the interface of the 30S and 50S subunits, it traverses the body of the 30S subunit contacting proteins on the other side and probably holding the rRNA structure together. The combined cluster of proteins S8, S12 and S17 appears to hold together the shoulder and platform of the 30S subunit. The protein is Small ribosomal subunit protein uS12 of Cupriavidus pinatubonensis (strain JMP 134 / LMG 1197) (Cupriavidus necator (strain JMP 134)).